The chain runs to 90 residues: MTFSTSSSFSRRALVALLVCTLLIDLSSFTDARPQDDPTSVAEAIRLLQELETKHAQHARPRFGKRSYLNPAGYGQDEQEDDWQDSTFTR.

A signal peptide spans 1-27 (MTFSTSSSFSRRALVALLVCTLLIDLS). The tract at residues 54 to 90 (KHAQHARPRFGKRSYLNPAGYGQDEQEDDWQDSTFTR) is disordered. Positions 56-65 (AQHARPRFGK) are enriched in basic residues. Position 63 is a phenylalanine amide (Phe-63). A propeptide spanning residues 67 to 90 (SYLNPAGYGQDEQEDDWQDSTFTR) is cleaved from the precursor.

The protein belongs to the NPY family. As to expression, expressed in hemolymph, brain and midgut.

The protein resides in the secreted. Its function is as follows. An integral part of the sensory system that mediates food signaling, providing the neural basis for the regulation of food response; coordinates larval foraging and social behavior changes during development. May have a hormonal role in females. This Aedes aegypti (Yellowfever mosquito) protein is Neuropeptide F (npf).